Consider the following 394-residue polypeptide: NAC domain-containing protein 3 (394 aa).

In terms of domain architecture, NAC spans 3–147 (TPVGLRFCPT…TYTLCKVMFN (145 aa)). The DNA-binding element occupies 104–153 (IGEKKILMFYTSKESKSDWVIHEYHGFSHNQMMMTYTLCKVMFNGGMREK). Disordered regions lie at residues 152-173 (EKSS…RRDS) and 264-300 (NSLT…CDSF). A compositionally biased stretch (low complexity) spans 155 to 165 (SSSPSSSGVSG). Residues 286-300 (PKTNSIQTSSTCDSF) show a composition bias toward polar residues.

The protein resides in the nucleus. This Arabidopsis thaliana (Mouse-ear cress) protein is NAC domain-containing protein 3 (NAC003).